Reading from the N-terminus, the 475-residue chain is Aspartyl/glutamyl-tRNA(Asn/Gln) amidotransferase subunit B (475 aa).

It belongs to the GatB/GatE family. GatB subfamily. As to quaternary structure, heterotrimer of A, B and C subunits.

The enzyme catalyses L-glutamyl-tRNA(Gln) + L-glutamine + ATP + H2O = L-glutaminyl-tRNA(Gln) + L-glutamate + ADP + phosphate + H(+). It catalyses the reaction L-aspartyl-tRNA(Asn) + L-glutamine + ATP + H2O = L-asparaginyl-tRNA(Asn) + L-glutamate + ADP + phosphate + 2 H(+). Functionally, allows the formation of correctly charged Asn-tRNA(Asn) or Gln-tRNA(Gln) through the transamidation of misacylated Asp-tRNA(Asn) or Glu-tRNA(Gln) in organisms which lack either or both of asparaginyl-tRNA or glutaminyl-tRNA synthetases. The reaction takes place in the presence of glutamine and ATP through an activated phospho-Asp-tRNA(Asn) or phospho-Glu-tRNA(Gln). In Chlorobium phaeobacteroides (strain DSM 266 / SMG 266 / 2430), this protein is Aspartyl/glutamyl-tRNA(Asn/Gln) amidotransferase subunit B.